The primary structure comprises 452 residues: Sulfide:quinone oxidoreductase, mitochondrial (452 aa).

Residues 54-55, E77, Q85, and V120 each bind FAD; that span reads AG. C204 serves as the catalytic Cysteine persulfide intermediate. The cysteines at positions 204 and 380 are disulfide-linked. FAD-binding positions include D337 and 345-348; that span reads KTAA. Catalysis depends on C380, which acts as the Cysteine persulfide intermediate.

It belongs to the SQRD family. FAD is required as a cofactor.

The protein resides in the mitochondrion. It carries out the reaction ubiquinone-10 + hydrogen sulfide + sulfite + 2 H(+) = ubiquinol-10 + thiosulfate. The enzyme catalyses a quinone + hydrogen sulfide + glutathione + H(+) = S-sulfanylglutathione + a quinol. Its function is as follows. Catalyzes the oxidation of hydrogen sulfide, with the help of a quinone. This is Sulfide:quinone oxidoreductase, mitochondrial from Dictyostelium discoideum (Social amoeba).